A 279-amino-acid chain; its full sequence is Undecaprenyl-diphosphatase (279 aa).

Helical transmembrane passes span 1–21 (MVLE…LPIS), 39–59 (GRFF…LYFF), 96–116 (LLLV…VRFV), 128–148 (FTMG…DALF), 155–175 (IFQI…FAII), 201–221 (FSFL…LVAG), 231–251 (YSLI…SALL), and 259–279 (FVLF…VSFF).

It belongs to the UppP family.

The protein localises to the cell membrane. The enzyme catalyses di-trans,octa-cis-undecaprenyl diphosphate + H2O = di-trans,octa-cis-undecaprenyl phosphate + phosphate + H(+). Functionally, catalyzes the dephosphorylation of undecaprenyl diphosphate (UPP). Confers resistance to bacitracin. The sequence is that of Undecaprenyl-diphosphatase from Tropheryma whipplei (strain Twist) (Whipple's bacillus).